The chain runs to 65 residues: MPKMKTHKGAAGRFEVMKRGKLRRRRAGHNHILEKKTSKRKRRLNTETYVNPADEKRVRRLLGVR.

Belongs to the bacterial ribosomal protein bL35 family.

In Rubrobacter xylanophilus (strain DSM 9941 / JCM 11954 / NBRC 16129 / PRD-1), this protein is Large ribosomal subunit protein bL35.